The sequence spans 263 residues: Gap junction beta-6 protein (263 aa).

Topologically, residues M1 to S19 are cytoplasmic. Residues I20–A40 traverse the membrane as a helical segment. Topologically, residues E41–R75 are extracellular. A helical transmembrane segment spans residues L76 to A96. The Cytoplasmic portion of the chain corresponds to Y97 to T137. The helical transmembrane segment at C138–Y158 threads the bilayer. Residues D159–T189 lie on the Extracellular side of the membrane. The helical transmembrane segment at V190–L210 threads the bilayer. The Cytoplasmic portion of the chain corresponds to C211–S263.

The protein belongs to the connexin family. Beta-type (group I) subfamily. As to quaternary structure, a connexon is composed of a hexamer of connexins. As to expression, exclusively expressed in the cochlea of the inner ear, where it is found in cells of the tegmentum vasculosum, cuboidal cells, supporting cells and clear cells.

It localises to the cell membrane. It is found in the cell junction. The protein localises to the gap junction. One gap junction consists of a cluster of closely packed pairs of transmembrane channels, the connexons, through which materials of low MW diffuse from one cell to a neighboring cell. The protein is Gap junction beta-6 protein (GJB6) of Gallus gallus (Chicken).